The following is a 420-amino-acid chain: Gamma-glutamyl phosphate reductase (420 aa).

The protein belongs to the gamma-glutamyl phosphate reductase family.

Its subcellular location is the cytoplasm. The enzyme catalyses L-glutamate 5-semialdehyde + phosphate + NADP(+) = L-glutamyl 5-phosphate + NADPH + H(+). Its pathway is amino-acid biosynthesis; L-proline biosynthesis; L-glutamate 5-semialdehyde from L-glutamate: step 2/2. Catalyzes the NADPH-dependent reduction of L-glutamate 5-phosphate into L-glutamate 5-semialdehyde and phosphate. The product spontaneously undergoes cyclization to form 1-pyrroline-5-carboxylate. The protein is Gamma-glutamyl phosphate reductase of Neisseria meningitidis serogroup B (strain ATCC BAA-335 / MC58).